The sequence spans 336 residues: tRNA-splicing endonuclease (336 aa).

Catalysis depends on residues Tyr-271, His-282, and Lys-313.

This sequence belongs to the tRNA-intron endonuclease family. Archaeal long subfamily. As to quaternary structure, homodimer.

The catalysed reaction is pretRNA = a 3'-half-tRNA molecule with a 5'-OH end + a 5'-half-tRNA molecule with a 2',3'-cyclic phosphate end + an intron with a 2',3'-cyclic phosphate and a 5'-hydroxyl terminus.. Functionally, endonuclease that removes tRNA introns. Cleaves pre-tRNA at the 5'- and 3'-splice sites to release the intron. The products are an intron and two tRNA half-molecules bearing 2',3' cyclic phosphate and 5'-OH termini. Recognizes a pseudosymmetric substrate in which 2 bulged loops of 3 bases are separated by a stem of 4 bp. In Natronomonas pharaonis (strain ATCC 35678 / DSM 2160 / CIP 103997 / JCM 8858 / NBRC 14720 / NCIMB 2260 / Gabara) (Halobacterium pharaonis), this protein is tRNA-splicing endonuclease.